A 610-amino-acid chain; its full sequence is ATP-dependent RNA helicase HAS1 (610 aa).

Disordered stretches follow at residues 1–81 (MTAA…AELK) and 112–131 (ALAVADLPSGTSIPTVDDPT). Residues 9–18 (KKRKRKHKAK) show a composition bias toward basic residues. Positions 51 to 76 (PEVEDVVADASENDVESGAEEDEEQV) are enriched in acidic residues. The Q motif motif lies at 131-159 (TRFDELNLSERTMEAIKTMGFESMTEIQR). Positions 162–337 (IPPLLSGKDV…RISLKAGPLY (176 aa)) constitute a Helicase ATP-binding domain. 175-182 (AKTGSGKT) lines the ATP pocket. The DEAD box signature appears at 285 to 288 (DEAD). The 171-residue stretch at 351 to 521 (GLEQGYVICD…NIQSQLEALI (171 aa)) folds into the Helicase C-terminal domain. Basic and acidic residues predominate over residues 584-594 (DKKVEGRREYG). The segment at 584 to 610 (DKKVEGRREYGRQPQQGRRPMKPNKRF) is disordered.

It belongs to the DEAD box helicase family. DDX18/HAS1 subfamily. In terms of assembly, associates in the nucleolus with the 60S and pre-60S ribosomal subunits.

It localises to the nucleus. Its subcellular location is the nucleolus. It catalyses the reaction ATP + H2O = ADP + phosphate + H(+). In terms of biological role, ATP-dependent RNA helicase involved in 40S ribosomal subunit biogenesis. Required for the processing and cleavage of 35S pre-rRNA at sites A0, A1, and A2, leading to mature 18S rRNA. This is ATP-dependent RNA helicase HAS1 (HAS1) from Phaeosphaeria nodorum (strain SN15 / ATCC MYA-4574 / FGSC 10173) (Glume blotch fungus).